Here is a 25-residue protein sequence, read N- to C-terminus: Chaperonin GroEL (25 aa).

Belongs to the chaperonin (HSP60) family. In terms of assembly, forms a cylinder of 14 subunits composed of two heptameric rings stacked back-to-back. Interacts with the co-chaperonin GroES.

It localises to the cytoplasm. The catalysed reaction is ATP + H2O + a folded polypeptide = ADP + phosphate + an unfolded polypeptide.. In terms of biological role, together with its co-chaperonin GroES, plays an essential role in assisting protein folding. The GroEL-GroES system forms a nano-cage that allows encapsulation of the non-native substrate proteins and provides a physical environment optimized to promote and accelerate protein folding. The sequence is that of Chaperonin GroEL from Delftia acidovorans (Pseudomonas acidovorans).